Reading from the N-terminus, the 457-residue chain is tRNA modification GTPase MnmE (457 aa).

R23, E85, and R124 together coordinate (6S)-5-formyl-5,6,7,8-tetrahydrofolate. The 157-residue stretch at 220–376 (GALVVLAGQV…LVTAIRAAVL (157 aa)) folds into the TrmE-type G domain. Position 230 (N230) interacts with K(+). GTP-binding positions include 230–235 (NAGKSS), 249–255 (TDLPGTT), and 274–277 (DTAG). Residue S234 participates in Mg(2+) binding. Positions 249, 251, and 254 each coordinate K(+). T255 contacts Mg(2+). Position 457 (K457) interacts with (6S)-5-formyl-5,6,7,8-tetrahydrofolate.

Belongs to the TRAFAC class TrmE-Era-EngA-EngB-Septin-like GTPase superfamily. TrmE GTPase family. As to quaternary structure, homodimer. Heterotetramer of two MnmE and two MnmG subunits. It depends on K(+) as a cofactor.

Its subcellular location is the cytoplasm. Functionally, exhibits a very high intrinsic GTPase hydrolysis rate. Involved in the addition of a carboxymethylaminomethyl (cmnm) group at the wobble position (U34) of certain tRNAs, forming tRNA-cmnm(5)s(2)U34. In Nitratidesulfovibrio vulgaris (strain DP4) (Desulfovibrio vulgaris), this protein is tRNA modification GTPase MnmE.